The sequence spans 299 residues: MFNQAAQELTTIRDVLRFAVSRFNEAGLFFGHGTDNAHDEAVYLILHTLNLPLDMLAPYLDAKLLEAEKEEVLAVIERRAVEHIPAAYLTHQAWQGEFDFYVDERVIVPRSFIYELLGDGLRPWIEYDELVHNALDLCTGSGCLAIQMAHHYPDAQIDAVDVSLDALEVAGINIEDYGLEERIQLIHTDLFEGLEGTYDLIVSNPPYVDAESVGALPEEYLHEPELALGSGADGLDATRQILLNAAKFLNPKGVLLVEIGHNRDVLEAAYPELPFTWLETSGGDGFVFLLTREQLLGEE.

It belongs to the protein N5-glutamine methyltransferase family. PrmB subfamily.

The catalysed reaction is L-glutaminyl-[ribosomal protein uL3] + S-adenosyl-L-methionine = N(5)-methyl-L-glutaminyl-[ribosomal protein uL3] + S-adenosyl-L-homocysteine + H(+). In terms of biological role, methylates large ribosomal subunit protein uL3 on a specific glutamine residue. This chain is Ribosomal protein uL3 glutamine methyltransferase, found in Neisseria gonorrhoeae (strain ATCC 700825 / FA 1090).